A 394-amino-acid chain; its full sequence is MVPARSLAHPHPHLVRRRRDHAAAAHGATARCDDDDDGVVTPRGPTRYMAQEPINHHQHQHDPPKQPPPREADDDHHRIQEREPLPPPTTTTRNQRLQLQLGGDGHHNHHHHHHQEVAGTSGSSSGGSSSNNGGGGTRDWLRLATGPASPGASAGSDHDLFPSTTTTAPAPQPPTPTPTPTPTPTPRHHHHDVLVLPGMPPPGSFLRPGPAMPGIPQASIPTHMLRAAPPWLPPWSPVAAPPPLLPFPHQHRAFYAAPPTTTPPASSGFDAIRVVLPPSAVAAAAGVWFVLQAAPLQGREPFLPQIPRSYLRIKDGRVTVRLLTKYLVNKLGLEDESEVEITCRGRQLLPILTLQHVRDSIWCRRDAVSPSAAPDIPTADHHQHIMVLQYGRRP.

The tract at residues 1 to 193 is disordered; the sequence is MVPARSLAHP…PTPRHHHHDV (193 aa). Residues 8–20 show a composition bias toward basic residues; it reads AHPHPHLVRRRRD. Basic and acidic residues predominate over residues 60–84; it reads QHDPPKQPPPREADDDHHRIQEREP. 3 stretches are compositionally biased toward low complexity: residues 90-101, 119-131, and 146-155; these read TTTRNQRLQLQL, GTSG…SSSN, and GPASPGASAG. The segment covering 170-185 has biased composition (pro residues); the sequence is APQPPTPTPTPTPTPT.

Interacts with LAX1.

Its subcellular location is the nucleus. Functionally, involved in the regulation of shoot branching by controlling axillary meristem (AM) formation. Functions in association with LAX1 to regulate the process of AM formation. Possesses transactivation activity in yeast. The protein is Protein LAX PANICLE 2 of Oryza sativa subsp. japonica (Rice).